A 181-amino-acid polypeptide reads, in one-letter code: Early E3 20.3 kDa glycoprotein (181 aa).

N-linked (GlcNAc...) asparagine; by host glycosylation is found at Asn29, Asn57, Asn70, and Asn75.

Belongs to the adenoviridae E3_20 family.

Functionally, E3 proteins seem to be dispensable for virus growth in tissue culture cells. They are potentially important for virus growth under special conditions; E3 region may help adenoviruses to evade the immune surveillance of the host. This Human adenovirus B serotype 11 (strain Slobiski) (HAdV-11) protein is Early E3 20.3 kDa glycoprotein.